A 199-amino-acid chain; its full sequence is GTP-binding protein Di-Ras2 (199 aa).

GTP is bound by residues Gly-14–Ser-21, Arg-33–Thr-39, Asp-61–Ser-65, and Asn-121–Asp-124. Ser-35 is subject to Phosphoserine. The short motif at Tyr-36–Tyr-44 is the Effector region element. Ser-126 is subject to Phosphoserine. Ala-152–Lys-153 is a GTP binding site. A Cysteine methyl ester modification is found at Cys-196. A lipid anchor (S-geranylgeranyl cysteine) is attached at Cys-196. A propeptide spans Val-197–Met-199 (removed in mature form).

Belongs to the small GTPase superfamily. Di-Ras family. Ubiquitinated by the ECS(ASB11) complex via 'Lys-11'-linked ubiquitin chains, leading to its degradation by the proteasome.

It localises to the cell membrane. The enzyme catalyses GTP + H2O = GDP + phosphate + H(+). Functionally, displays low GTPase activity and exists predominantly in the GTP-bound form. The protein is GTP-binding protein Di-Ras2 (DIRAS2) of Pongo abelii (Sumatran orangutan).